The sequence spans 511 residues: Apolipoprotein N-acyltransferase (511 aa).

The next 6 membrane-spanning stretches (helical) occupy residues 7 to 29 (PGWP…LAPF), 58 to 78 (GWWY…VSIH), 90 to 110 (LLML…AWLW), 125 to 145 (LAFA…LTGF), 163 to 183 (VPVG…ALLV), and 192 to 212 (GASL…GLYL). One can recognise a CN hydrolase domain in the interval 230 to 470 (IQGNIAQELK…QGILRGEVIP (241 aa)). E269 (proton acceptor) is an active-site residue. K330 is a catalytic residue. The active-site Nucleophile is C382. The helical transmembrane segment at 482 to 502 (VWPLAGLAGVLLLWALLGRQL) threads the bilayer.

The protein belongs to the CN hydrolase family. Apolipoprotein N-acyltransferase subfamily.

The protein localises to the cell inner membrane. It carries out the reaction N-terminal S-1,2-diacyl-sn-glyceryl-L-cysteinyl-[lipoprotein] + a glycerophospholipid = N-acyl-S-1,2-diacyl-sn-glyceryl-L-cysteinyl-[lipoprotein] + a 2-acyl-sn-glycero-3-phospholipid + H(+). Its pathway is protein modification; lipoprotein biosynthesis (N-acyl transfer). In terms of biological role, catalyzes the phospholipid dependent N-acylation of the N-terminal cysteine of apolipoprotein, the last step in lipoprotein maturation. In Pseudomonas aeruginosa (strain LESB58), this protein is Apolipoprotein N-acyltransferase.